Reading from the N-terminus, the 91-residue chain is Proline, histidine and glycine-rich protein 1 (91 aa).

Positions 1-91 (MHPGGKGHCG…HCGPHPGPHH (91 aa)) are disordered. Gly residues-rich tracts occupy residues 33 to 42 (HPGHGPGHCP), 49 to 63 (GHGGPSHGHGPGHCP), and 70 to 82 (GHGGPSHGHGPGH).

The sequence is that of Proline, histidine and glycine-rich protein 1 (Phgr1) from Mus musculus (Mouse).